Consider the following 1000-residue polypeptide: uncharacterized protein (1000 aa).

Basic and acidic residues predominate over residues 787-809 (RQYEKLKRQRAKSETERHQERHG). A disordered region spans residues 787–812 (RQYEKLKRQRAKSETERHQERHGKLS).

This is an uncharacterized protein from Picosynechococcus sp. (strain ATCC 27264 / PCC 7002 / PR-6) (Agmenellum quadruplicatum).